A 305-amino-acid chain; its full sequence is ATP synthase gamma chain (305 aa).

The protein belongs to the ATPase gamma chain family. As to quaternary structure, F-type ATPases have 2 components, CF(1) - the catalytic core - and CF(0) - the membrane proton channel. CF(1) has five subunits: alpha(3), beta(3), gamma(1), delta(1), epsilon(1). CF(0) has three main subunits: a, b and c.

It localises to the cell membrane. Produces ATP from ADP in the presence of a proton gradient across the membrane. The gamma chain is believed to be important in regulating ATPase activity and the flow of protons through the CF(0) complex. This is ATP synthase gamma chain from Streptomyces avermitilis (strain ATCC 31267 / DSM 46492 / JCM 5070 / NBRC 14893 / NCIMB 12804 / NRRL 8165 / MA-4680).